The following is a 322-amino-acid chain: uncharacterized protein (322 aa).

Over residues 1-17 the composition is skewed to low complexity; that stretch reads MASMAAAIAASRSAVMS. Residues 1-22 form a disordered region; it reads MASMAAAIAASRSAVMSGNRPL. An N-acetylalanine modification is found at Ala2. Phosphoserine is present on Ser37. Positions 81 to 104 are disordered; it reads AAAADAGDVRDPARFPGLRGPTGQ. Position 130 is a phosphoserine (Ser130). 2 stretches are compositionally biased toward polar residues: residues 142–153 and 161–177; these read QEPSAATVTSDA and QGTQ…SSSL. Residues 142–301 are disordered; it reads QEPSAATVTS…DDDALFSEPA (160 aa). The residue at position 176 (Ser176) is a Phosphoserine. Over residues 183-203 the composition is skewed to basic and acidic residues; it reads ARKEEEAPFWKINAERSREGP. Positions 245-255 are enriched in polar residues; it reads QEQQTLPSVSA.

It is found in the cytoplasm. This is an uncharacterized protein from Mus musculus (Mouse).